A 246-amino-acid polypeptide reads, in one-letter code: 1-(5-phosphoribosyl)-5-[(5-phosphoribosylamino)methylideneamino] imidazole-4-carboxamide isomerase (246 aa).

Asp-8 functions as the Proton acceptor in the catalytic mechanism. Catalysis depends on Asp-129, which acts as the Proton donor.

It belongs to the HisA/HisF family.

Its subcellular location is the cytoplasm. The enzyme catalyses 1-(5-phospho-beta-D-ribosyl)-5-[(5-phospho-beta-D-ribosylamino)methylideneamino]imidazole-4-carboxamide = 5-[(5-phospho-1-deoxy-D-ribulos-1-ylimino)methylamino]-1-(5-phospho-beta-D-ribosyl)imidazole-4-carboxamide. Its pathway is amino-acid biosynthesis; L-histidine biosynthesis; L-histidine from 5-phospho-alpha-D-ribose 1-diphosphate: step 4/9. In Desulforamulus reducens (strain ATCC BAA-1160 / DSM 100696 / MI-1) (Desulfotomaculum reducens), this protein is 1-(5-phosphoribosyl)-5-[(5-phosphoribosylamino)methylideneamino] imidazole-4-carboxamide isomerase.